A 188-amino-acid chain; its full sequence is dCTP deaminase (188 aa).

DCTP contacts are provided by residues 111–116 (KSTYAR), 135–137 (TLE), Q156, Y170, and Q180. The active-site Proton donor/acceptor is E137.

The protein belongs to the dCTP deaminase family. Homotrimer.

It catalyses the reaction dCTP + H2O + H(+) = dUTP + NH4(+). The protein operates within pyrimidine metabolism; dUMP biosynthesis; dUMP from dCTP (dUTP route): step 1/2. Functionally, catalyzes the deamination of dCTP to dUTP. The chain is dCTP deaminase from Nitrosomonas eutropha (strain DSM 101675 / C91 / Nm57).